A 486-amino-acid polypeptide reads, in one-letter code: ATP synthase subunit beta (486 aa).

Position 164-171 (164-171 (GGAGVGKT)) interacts with ATP.

This sequence belongs to the ATPase alpha/beta chains family. As to quaternary structure, F-type ATPases have 2 components, CF(1) - the catalytic core - and CF(0) - the membrane proton channel. CF(1) has five subunits: alpha(3), beta(3), gamma(1), delta(1), epsilon(1). CF(0) has four main subunits: a(1), b(1), b'(1) and c(9-12).

The protein resides in the cellular thylakoid membrane. The catalysed reaction is ATP + H2O + 4 H(+)(in) = ADP + phosphate + 5 H(+)(out). In terms of biological role, produces ATP from ADP in the presence of a proton gradient across the membrane. The catalytic sites are hosted primarily by the beta subunits. This Prochlorococcus marinus subsp. pastoris (strain CCMP1986 / NIES-2087 / MED4) protein is ATP synthase subunit beta.